We begin with the raw amino-acid sequence, 182 residues long: U1 small nuclear ribonucleoprotein C (182 aa).

The Matrin-type zinc-finger motif lies at 4-36 (YLCDYCQVWLTHDSQSVRKAHNAGRAHIQNVQD). A disordered region spans residues 129–182 (PQTTASSNTQLTQQQQSLPQTNEHQRARTHSNANNHFTKTHHQGQRSHQRFVRA). The span at 130–150 (QTTASSNTQLTQQQQSLPQTN) shows a compositional bias: low complexity. Positions 166-182 (TKTHHQGQRSHQRFVRA) are enriched in basic residues.

This sequence belongs to the U1 small nuclear ribonucleoprotein C family. U1 snRNP is composed of the 7 core Sm proteins smb1, smd1, smd2, smd3, sme1, smf1 and smg1 (Sm proteins B, D1, D2, D3, E, F and G, respectively) that assemble in a heptameric protein ring on the Sm site of the small nuclear RNA to form the core snRNP, and at least 9 U1 snRNP-specific proteins usp101/U1-70K, usp102/U1-A, usp103/U1-C, usp106/LUC7, usp105/PRP39, usp104/PRP40, usp107/U1-H, usp108/U1-J and usp109/U1-L. usp103/U1-C interacts with U1 snRNA and the 5' splice-site region of the pre-mRNA.

Its subcellular location is the nucleus. Component of the spliceosomal U1 snRNP, which is essential for recognition of the pre-mRNA 5' splice-site and the subsequent assembly of the spliceosome. usp103/U1-C is directly involved in initial 5' splice-site recognition for both constitutive and regulated alternative splicing. The interaction with the 5' splice-site seems to precede base-pairing between the pre-mRNA and the U1 snRNA. Stimulates commitment or early (E) complex formation by stabilizing the base pairing of the 5' end of the U1 snRNA and the 5' splice-site region. This Schizosaccharomyces pombe (strain 972 / ATCC 24843) (Fission yeast) protein is U1 small nuclear ribonucleoprotein C (usp103).